Consider the following 351-residue polypeptide: Soluble interferon alpha/beta receptor OPG204 (351 aa).

Residues 1–19 form the signal peptide; the sequence is MTMKMMVHIYFVSLLLLLF. Ig-like C2-type domains are found at residues 65 to 147 and 155 to 237; these read LGEP…RSHI and PKTY…IVVS. 2 cysteine pairs are disulfide-bonded: Cys73–Cys129 and Cys172–Cys221. Asn117, Asn182, Asn261, Asn269, and Asn321 each carry an N-linked (GlcNAc...) asparagine; by host glycan. In terms of domain architecture, Ig-like V-type spans 246–345; that stretch reads PSQDHRFKLI…HNYYFEKTLT (100 aa). Cys272 and Cys333 are oxidised to a cystine.

This sequence belongs to the interleukin-1 receptor family. Interacts with host IFNA1.

Its subcellular location is the secreted. Counteracts the antiviral effects of host IFN-alpha/beta and key IFN-inducible proteins involved in viral RNA degradation suxh as host OAS1. Acts as a soluble IFN-alpha receptor and thus inhibits the interaction between host IFN-alpha and its receptor. This chain is Soluble interferon alpha/beta receptor OPG204 (OPG204), found in Vaccinia virus (strain Western Reserve) (VACV).